The sequence spans 294 residues: Beta-lactamase (294 aa).

Residues 1 to 27 form the signal peptide; that stretch reads MFKKRGRQTVLIAAVLAFFTASSPLLA. The active-site Acyl-ester intermediate is S76. E174 serves as the catalytic Proton acceptor. Residue 240-242 participates in substrate binding; it reads KTG.

This sequence belongs to the class-A beta-lactamase family.

The enzyme catalyses a beta-lactam + H2O = a substituted beta-amino acid. The chain is Beta-lactamase from Citrobacter koseri (Citrobacter diversus).